The sequence spans 132 residues: Small ribosomal subunit protein uS12 (132 aa).

3-methylthioaspartic acid is present on D89. Residues 103 to 132 (DTSGVADRRQSRSKYGAKQPKEGGAAKGKK) are disordered.

The protein belongs to the universal ribosomal protein uS12 family. As to quaternary structure, part of the 30S ribosomal subunit. Contacts proteins S8 and S17. May interact with IF1 in the 30S initiation complex.

Functionally, with S4 and S5 plays an important role in translational accuracy. In terms of biological role, interacts with and stabilizes bases of the 16S rRNA that are involved in tRNA selection in the A site and with the mRNA backbone. Located at the interface of the 30S and 50S subunits, it traverses the body of the 30S subunit contacting proteins on the other side and probably holding the rRNA structure together. The combined cluster of proteins S8, S12 and S17 appears to hold together the shoulder and platform of the 30S subunit. This is Small ribosomal subunit protein uS12 from Chlorobium phaeovibrioides (strain DSM 265 / 1930) (Prosthecochloris vibrioformis (strain DSM 265)).